The primary structure comprises 303 residues: Peroxisomal trans-2-enoyl-CoA reductase (303 aa).

Position 23–47 (23–47 (VTGGATGIGKAIVKELLELGSNVVI)) interacts with NADP(+). An N6-succinyllysine modification is found at K32. Position 49 is a phosphoserine (S49). Y179 acts as the Proton acceptor in catalysis. Y179 carries the phosphotyrosine modification. A Microbody targeting signal motif is present at residues 301–303 (AKL).

This sequence belongs to the short-chain dehydrogenases/reductases (SDR) family. Interacts with PEX5, probably required to target it into peroxisomes.

The protein resides in the peroxisome. It catalyses the reaction a (2E)-enoyl-CoA + NADPH + H(+) = a 2,3-saturated acyl-CoA + NADP(+). The catalysed reaction is (2E)-hexenoyl-CoA + NADPH + H(+) = hexanoyl-CoA + NADP(+). The enzyme catalyses (2E)-octenoyl-CoA + NADPH + H(+) = octanoyl-CoA + NADP(+). It carries out the reaction (2E)-decenoyl-CoA + NADPH + H(+) = decanoyl-CoA + NADP(+). It catalyses the reaction (2E)-dodecenoyl-CoA + NADPH + H(+) = dodecanoyl-CoA + NADP(+). The catalysed reaction is (2E)-tetradecenoyl-CoA + NADPH + H(+) = tetradecanoyl-CoA + NADP(+). It functions in the pathway lipid metabolism; fatty acid biosynthesis. Participates in chain elongation of fatty acids. Catalyzes the reduction of trans-2-enoyl-CoAs of varying chain lengths from 6:1 to 16:1, having maximum activity with 10:1 CoA. Has no 2,4-dienoyl-CoA reductase activity. This Pongo abelii (Sumatran orangutan) protein is Peroxisomal trans-2-enoyl-CoA reductase (PECR).